Reading from the N-terminus, the 345-residue chain is Anthranilate phosphoribosyltransferase (345 aa).

5-phospho-alpha-D-ribose 1-diphosphate-binding positions include G86, G89–D90, T94, N96–T99, K114–S122, and S126. G86 is a binding site for anthranilate. Position 98 (S98) interacts with Mg(2+). R172 serves as a coordination point for anthranilate. D231 and E232 together coordinate Mg(2+).

This sequence belongs to the anthranilate phosphoribosyltransferase family. In terms of assembly, homodimer. The cofactor is Mg(2+).

The enzyme catalyses N-(5-phospho-beta-D-ribosyl)anthranilate + diphosphate = 5-phospho-alpha-D-ribose 1-diphosphate + anthranilate. Its pathway is amino-acid biosynthesis; L-tryptophan biosynthesis; L-tryptophan from chorismate: step 2/5. Functionally, catalyzes the transfer of the phosphoribosyl group of 5-phosphorylribose-1-pyrophosphate (PRPP) to anthranilate to yield N-(5'-phosphoribosyl)-anthranilate (PRA). This Ralstonia pickettii (strain 12J) protein is Anthranilate phosphoribosyltransferase.